We begin with the raw amino-acid sequence, 443 residues long: Postreplication repair E3 ubiquitin-protein ligase rad18 (443 aa).

An RING-type zinc finger spans residues 30–68; it reads CQVCKDFFDNPVITSCSHTFCSLCIRRCLSTEGKCPTCR. Residues 106 to 157 form a disordered region; the sequence is GTDDSGDLAAEEPASKKRKIEPNAIVGTDGLPEEGIRTRSQSRGASRQPQAT. Polar residues predominate over residues 143 to 157; the sequence is TRSQSRGASRQPQAT. A UBZ4-type zinc finger spans residues 175 to 202; sequence LVPCPVCGRRMKEEAVFRHLDSCTGTAE. 4 residues coordinate Zn(2+): cysteine 178, cysteine 181, histidine 193, and cysteine 197. The SAP domain occupies 239–273; it reads LKDTVLRKKLKDLGIPNWGPRALLQRRHTEWLNLW. 2 stretches are compositionally biased toward polar residues: residues 350–363 and 431–443; these read IPNASQANSDTPRS and PISSSASTHKTPH. Residues 350–443 are disordered; sequence IPNASQANSD…SSASTHKTPH (94 aa).

Belongs to the RAD18 family. Interacts with E2 UBC2, forming a complex with ubiquitin ligase activity.

It localises to the nucleus. It carries out the reaction S-ubiquitinyl-[E2 ubiquitin-conjugating enzyme]-L-cysteine + [acceptor protein]-L-lysine = [E2 ubiquitin-conjugating enzyme]-L-cysteine + N(6)-ubiquitinyl-[acceptor protein]-L-lysine.. It participates in protein modification; protein ubiquitination. Functionally, E3 RING-finger protein, member of the UBC2/RAD6 epistasis group. Associates to the E2 ubiquitin conjugating enzyme UBC2/RAD6 to form the UBC2-RAD18 ubiquitin ligase complex involved in postreplicative repair (PRR) of damaged DNA. The sequence is that of Postreplication repair E3 ubiquitin-protein ligase rad18 (uvsH) from Emericella nidulans (strain FGSC A4 / ATCC 38163 / CBS 112.46 / NRRL 194 / M139) (Aspergillus nidulans).